Reading from the N-terminus, the 201-residue chain is Peptide deformylase (201 aa).

Residues 1-24 (MANHFSQLAKKSKTNGNSEKIAKE) form a disordered region. Fe cation is bound by residues Cys121 and His163. Glu164 is an active-site residue. His167 is a Fe cation binding site.

Belongs to the polypeptide deformylase family. Fe(2+) serves as cofactor.

The enzyme catalyses N-terminal N-formyl-L-methionyl-[peptide] + H2O = N-terminal L-methionyl-[peptide] + formate. Its function is as follows. Removes the formyl group from the N-terminal Met of newly synthesized proteins. Requires at least a dipeptide for an efficient rate of reaction. N-terminal L-methionine is a prerequisite for activity but the enzyme has broad specificity at other positions. This Prochlorococcus marinus (strain MIT 9312) protein is Peptide deformylase.